Here is a 182-residue protein sequence, read N- to C-terminus: Ribulose bisphosphate carboxylase small subunit, chloroplastic (182 aa).

Residues 1 to 58 (MACSMISSATVAAVSRASPAQSSMVAPFTCLKSTSAFPVTQKTNNDITSIASNGGRVQ) constitute a chloroplast transit peptide.

Belongs to the RuBisCO small chain family. Heterohexadecamer of 8 large and 8 small subunits.

It is found in the plastid. It localises to the chloroplast. RuBisCO catalyzes two reactions: the carboxylation of D-ribulose 1,5-bisphosphate, the primary event in carbon dioxide fixation, as well as the oxidative fragmentation of the pentose substrate. Both reactions occur simultaneously and in competition at the same active site. Although the small subunit is not catalytic it is essential for maximal activity. The chain is Ribulose bisphosphate carboxylase small subunit, chloroplastic from Betula pendula (European white birch).